The following is a 186-amino-acid chain: uncharacterized protein (186 aa).

A signal peptide spans 1-18 (MKKFFFAAALVVSGLLVG). Cys-19 carries the N-palmitoyl cysteine lipid modification. Cys-19 carries S-diacylglycerol cysteine lipidation.

It localises to the cell membrane. This is an uncharacterized protein from Salmonella typhimurium (strain LT2 / SGSC1412 / ATCC 700720).